A 307-amino-acid polypeptide reads, in one-letter code: 2-dehydropantoate 2-reductase (307 aa).

Residues Gly-7 to Gly-12, Asn-102, and Ala-128 contribute to the NADP(+) site. Asn-102 serves as a coordination point for substrate. Lys-184 acts as the Proton donor in catalysis. Substrate contacts are provided by Asn-188, Asn-192, and Ser-255. Glu-268 provides a ligand contact to NADP(+).

This sequence belongs to the ketopantoate reductase family.

It is found in the cytoplasm. The catalysed reaction is (R)-pantoate + NADP(+) = 2-dehydropantoate + NADPH + H(+). Its pathway is cofactor biosynthesis; (R)-pantothenate biosynthesis; (R)-pantoate from 3-methyl-2-oxobutanoate: step 2/2. Functionally, catalyzes the NADPH-dependent reduction of ketopantoate into pantoic acid. This Streptococcus pyogenes serotype M1 protein is 2-dehydropantoate 2-reductase (apbA).